The primary structure comprises 146 residues: Putative esterase DR_2321 (146 aa).

Belongs to the thioesterase PaaI family.

The polypeptide is Putative esterase DR_2321 (Deinococcus radiodurans (strain ATCC 13939 / DSM 20539 / JCM 16871 / CCUG 27074 / LMG 4051 / NBRC 15346 / NCIMB 9279 / VKM B-1422 / R1)).